A 406-amino-acid chain; its full sequence is Type IV pilus assembly protein PilC (406 aa).

4 helical membrane passes run 69-91 (IFSRQLATMLGAGLTLLQALAIL), 171-191 (YPVIVFVFAVGVAYFLLTGIV), 211-231 (FLIAVSDLLRAATLPLLLLAV), and 377-397 (MIIFLGVIVGMIVAGMFLPLF).

Belongs to the GSP F family. In terms of assembly, homotetramer. Interacts with PilB.

The protein localises to the cell inner membrane. Essential inner membrane component of the type IV pilus (T4P) that plays a role in surface and host cell adhesion, colonization, biofilm maturation, virulence, and twitching, a form of surface-associated motility facilitated by cycles of extension, adhesion, and retraction of T4P fibers. Controls both pilus assembly and disassembly and plays an important role in PilB localization to the complex and ATPase activity. The protein is Type IV pilus assembly protein PilC of Thermus thermophilus (strain ATCC 27634 / DSM 579 / HB8).